A 230-amino-acid polypeptide reads, in one-letter code: UPF0173 metal-dependent hydrolase MK1542 (230 aa).

Belongs to the UPF0173 family.

This chain is UPF0173 metal-dependent hydrolase MK1542, found in Methanopyrus kandleri (strain AV19 / DSM 6324 / JCM 9639 / NBRC 100938).